The sequence spans 396 residues: Subtilisin-like protease 5 (396 aa).

The signal sequence occupies residues 1–20 (MTGFFTILSFSLAALSVTNA). Positions 21–116 (AQILSVPKGA…VEPDAIISQH (96 aa)) are excised as a propeptide. Residues 37-113 (YIVVMKDDTS…VAFVEPDAII (77 aa)) enclose the Inhibitor I9 domain. A glycan (N-linked (GlcNAc...) asparagine) is linked at asparagine 63. A Peptidase S8 domain is found at 125-396 (PWGLSRLSNR…TRLLYNGSGR (272 aa)). Catalysis depends on charge relay system residues aspartate 156 and histidine 187. 2 N-linked (GlcNAc...) asparagine glycosylation sites follow: asparagine 230 and asparagine 248. The active-site Charge relay system is the serine 342. Polar residues predominate over residues 377–389 (TIRNPGPDTTTRL). Residues 377–396 (TIRNPGPDTTTRLLYNGSGR) are disordered. Asparagine 392 carries an N-linked (GlcNAc...) asparagine glycan.

The protein belongs to the peptidase S8 family.

Its subcellular location is the secreted. Its function is as follows. Secreted subtilisin-like serine protease with keratinolytic activity that contributes to pathogenicity. The polypeptide is Subtilisin-like protease 5 (SUB5) (Arthroderma benhamiae (Trichophyton mentagrophytes)).